The primary structure comprises 516 residues: Probable rhamnogalacturonase B (516 aa).

A signal peptide spans 1-21 (MRLHAFTLLSLLGLVPSFAAA). The cysteines at positions 42 and 68 are disulfide-linked. N-linked (GlcNAc...) asparagine glycosylation is present at asparagine 145. Aspartate 219 acts as the Proton donor in catalysis. Cysteine 221 and cysteine 238 are oxidised to a cystine. An N-linked (GlcNAc...) asparagine glycan is attached at asparagine 239. Residue histidine 294 is part of the active site. Asparagine 321 is a glycosylation site (N-linked (GlcNAc...) asparagine). Disulfide bonds link cysteine 344–cysteine 350 and cysteine 372–cysteine 381. Positions 462–516 (ETPAAASRSEQVVQGASQETSQPAPESAGPVRSVPTGGNRPSRHRHGHHHFWIAA) are disordered. A compositionally biased stretch (polar residues) spans 469–485 (RSEQVVQGASQETSQPA). Residues 502–516 (PSRHRHGHHHFWIAA) are compositionally biased toward basic residues.

Belongs to the glycosyl hydrolase 28 family.

Its subcellular location is the secreted. It catalyses the reaction Endohydrolysis of alpha-D-GalA-(1-&gt;2)-alpha-L-Rha glycosidic bond in the rhamnogalacturonan I backbone with initial inversion of anomeric configuration releasing oligosaccharides with beta-D-GalA at the reducing end.. Functionally, pectinolytic enzymes consist of four classes of enzymes: pectine lyase, polygalacturonase, pectin methylesterase and rhamnogalacturonase. Hydrolyzes alpha-D-galacturonopyranosyl-(1,2)-alpha-L-rhamnopyranosyl linkages in the backbone of the hairy regions of pectins. The chain is Probable rhamnogalacturonase B (rhgB) from Neosartorya fischeri (strain ATCC 1020 / DSM 3700 / CBS 544.65 / FGSC A1164 / JCM 1740 / NRRL 181 / WB 181) (Aspergillus fischerianus).